The primary structure comprises 166 residues: Emerin homolog 1 (166 aa).

Residues 1-44 (MDVSQLTDAELRDSLKSHGVSVGPIVATTRKLYEKKLIKLSDGS) enclose the LEM domain. At 1-127 (MDVSQLTDAE…QAQSNKGGFL (127 aa)) the chain is on the nuclear side. Positions 62–99 (IISSSPKKSPPQRVFQNVSAATAAATTSPESDSDDCEE) are disordered. Residues 128–148 (GSTITFTILFVFIAVFAYFLI) form a helical membrane-spanning segment. Residues 149 to 166 (ENAEQLKLVAETNPEDTI) lie on the Perinuclear space side of the membrane.

As to quaternary structure, interacts with lmn-1 and baf-1. In terms of tissue distribution, ubiquitous. Expressed in all cells, except in cells undergoing spermatogenesis. High expression in hypodermis, neurons, pharyngeal muscle, body wall muscle and gonadal sheath.

The protein localises to the nucleus inner membrane. It localises to the nucleus envelope. In terms of biological role, nuclear lamina-associated inner nuclear membrane protein that is involved in cell division, nuclear structure organization, maintenance of nuclear envelope integrity and nuclear envelope reformation after mitosis. Involved in chromosome segregation and cell division, probably via its interaction with the nuclear intermediate filament protein lmn-1, the main component of nuclear lamina. Required to organize the distribution of lmn-1, nuclear pore complexes (NPCs) and chromatin in mitotically active cells. Together with lem-2, plays a role in baf-1 enrichment at the nuclear envelope in anaphase. Together with lem-2, involved in muscle cell attachment to hypodermal cells, as well as muscle cell location and sarcomere organization. May play a role in radiation-induced DNA damage repair response. May repress binding of transcription factor pha-4 with target sequences in pharyngeal cells. This is Emerin homolog 1 (emr-1) from Caenorhabditis elegans.